The chain runs to 635 residues: Extracellular metalloproteinase 1 (635 aa).

The first 19 residues, 1-19, serve as a signal peptide directing secretion; it reads MHGLLLAAGLLSLPLHVLA. Residues 20 to 246 constitute a propeptide that is removed on maturation; that stretch reads HPQPSTSTSL…VHNVVDYVAH (227 aa). N-linked (GlcNAc...) asparagine glycosylation is present at Asn-287. Zn(2+) is bound at residue His-430. Glu-431 is a catalytic residue. Residue His-434 participates in Zn(2+) binding. 3 N-linked (GlcNAc...) asparagine glycosylation sites follow: Asn-475, Asn-594, and Asn-623.

The protein belongs to the peptidase M36 family. Zn(2+) is required as a cofactor.

Its subcellular location is the secreted. Secreted metalloproteinase probably acting as a virulence factor. The chain is Extracellular metalloproteinase 1 (MEP1) from Trichophyton rubrum (Athlete's foot fungus).